The primary structure comprises 313 residues: MERIDSHVSPRYAQIPTFMRLPHDPQPRGYDVVVIGAPYDGGTSYRPGARFGPQAIRSESGLIHGVGIDRGPGTFDLINCVDAGDINLTPFDMNIAIDTAQSHLSGLLKANAAFLMIGGDHSLTVAALRAVAEQHGPLAVVHLDAHSDTNPAFYGGRYHHGTPFRHGIDEKLIDPAAMVQIGIRGHNPKPDSLDYARGHGVRVVTADEFGELGVGGTADLIREKVGQRPVYVSVDIDVVDPAFAPGTGTPAPGGLLSREVLALLRCVGDLKPVGFDVMEVSPLYDHGGITSILATEIGAELLYQYARAHRTQL.

Mn(2+) is bound by residues H121, D144, H146, D148, D235, and D237.

Belongs to the arginase family. In terms of assembly, homohexamer. Mn(2+) is required as a cofactor.

It carries out the reaction amidinoproclavaminate + H2O = proclavaminate + urea. It participates in antibiotic biosynthesis; clavulanate biosynthesis; clavulanate from D-glyceraldehyde 3-phosphate and L-arginine: step 4/8. The chain is Proclavaminate amidinohydrolase (pah) from Streptomyces clavuligerus.